The chain runs to 97 residues: Protein RADIALIS-like 6 (97 aa).

Positions 7-59 (SSISPWTFSQNKMFERALAVYDKDTPDRWHNVAKAVGGKTVEEVKRHYDILVE) constitute an SANT domain.

In terms of tissue distribution, expressed in the micropylar endosperm surrounding globular-stage embryos but no expression was detected elsewhere, including floral tissues.

The protein resides in the nucleus. In terms of biological role, probable transcription factor. The sequence is that of Protein RADIALIS-like 6 (RL6) from Arabidopsis thaliana (Mouse-ear cress).